Here is a 276-residue protein sequence, read N- to C-terminus: Elongation factor Ts, mitochondrial (276 aa).

This sequence belongs to the EF-Ts family.

The protein localises to the mitochondrion. In terms of biological role, associates with the EF-Tu.GDP complex and induces the exchange of GDP to GTP. It remains bound to the aminoacyl-tRNA.EF-Tu.GTP complex up to the GTP hydrolysis stage on the ribosome. This Leishmania braziliensis protein is Elongation factor Ts, mitochondrial.